Reading from the N-terminus, the 26-residue chain is Acyl carrier protein (26 aa).

A Carrier domain is found at 2–26; the sequence is SDTATRVQKIVVEHLGVESDKVTQE.

It belongs to the acyl carrier protein (ACP) family. Post-translationally, 4'-phosphopantetheine is transferred from CoA to a specific serine of apo-ACP by AcpS. This modification is essential for activity because fatty acids are bound in thioester linkage to the sulfhydryl of the prosthetic group.

The protein resides in the cytoplasm. Its pathway is lipid metabolism; fatty acid biosynthesis. In terms of biological role, carrier of the growing fatty acid chain in fatty acid biosynthesis. The protein is Acyl carrier protein (acpP) of Erythrobacter longus.